Consider the following 335-residue polypeptide: Ketol-acid reductoisomerase (NADP(+)) (335 aa).

Residues 5-185 (SKIYTDKDSN…GATRAGVIPT (181 aa)) form the KARI N-terminal Rossmann domain. Residues 28–31 (YGSQ), serine 56, and 86–89 (DMVQ) contribute to the NADP(+) site. Residue histidine 111 is part of the active site. Residue glycine 137 coordinates NADP(+). The region spanning 186-331 (TFKEETETDL…NQLKDLIQKG (146 aa)) is the KARI C-terminal knotted domain. The Mg(2+) site is built by aspartate 194, glutamate 198, glutamate 230, and glutamate 234. A substrate-binding site is contributed by serine 255.

It belongs to the ketol-acid reductoisomerase family. Mg(2+) is required as a cofactor.

The catalysed reaction is (2R)-2,3-dihydroxy-3-methylbutanoate + NADP(+) = (2S)-2-acetolactate + NADPH + H(+). It carries out the reaction (2R,3R)-2,3-dihydroxy-3-methylpentanoate + NADP(+) = (S)-2-ethyl-2-hydroxy-3-oxobutanoate + NADPH + H(+). The protein operates within amino-acid biosynthesis; L-isoleucine biosynthesis; L-isoleucine from 2-oxobutanoate: step 2/4. It participates in amino-acid biosynthesis; L-valine biosynthesis; L-valine from pyruvate: step 2/4. In terms of biological role, involved in the biosynthesis of branched-chain amino acids (BCAA). Catalyzes an alkyl-migration followed by a ketol-acid reduction of (S)-2-acetolactate (S2AL) to yield (R)-2,3-dihydroxy-isovalerate. In the isomerase reaction, S2AL is rearranged via a Mg-dependent methyl migration to produce 3-hydroxy-3-methyl-2-ketobutyrate (HMKB). In the reductase reaction, this 2-ketoacid undergoes a metal-dependent reduction by NADPH to yield (R)-2,3-dihydroxy-isovalerate. This is Ketol-acid reductoisomerase (NADP(+)) from Saccharolobus islandicus (strain L.S.2.15 / Lassen #1) (Sulfolobus islandicus).